The chain runs to 117 residues: Appetite-regulating hormone (117 aa).

The signal sequence occupies residues 1-23; it reads MPSPGTVCSLLLFSMLWADLAMA. A lipid anchor (O-decanoyl serine; alternate) is attached at Ser26. The O-hexanoyl serine; alternate moiety is linked to residue Ser26. Ser26 is lipidated: O-octanoyl serine; alternate. The interval 29–52 is disordered; the sequence is SPEHQKVQQRKESKKPPAKLQPRA. Residues 31–43 show a composition bias toward basic and acidic residues; the sequence is EHQKVQQRKESKK. The propeptide at 52-75 is removed in mature form; the sequence is ALEGLIHPEDTSQVEGAEDELEIR. Leucine amide is present on Leu98. The propeptide at 99–117 is removed in mature form; it reads GKFLQDVLWEEADEVLADE.

This sequence belongs to the motilin family. In terms of processing, O-octanoylated by GOAT/MBOAT4. O-octanoylation or O-decanoylation is essential for ghrelin activity. The O-decanoylated forms Ghrelin-27-C10 and Ghrelin-28-C10 differ in the length of the carbon backbone of the carboxylic acid bound to Ser-26. A small fraction of ghrelin, ghrelin-27-C10:1, ghrelin-27-C10:2, ghrelin-28-C8:1, ghrelin-28-C10:1, and ghrelin-28-C10:2, may be modified with singly or doubly unsaturated carboxylic acids. Amidation of Leu-98 is essential for obestatin activity.

The protein localises to the secreted. Functionally, ghrelin is the ligand for growth hormone secretagogue receptor type 1 (GHSR). Induces the release of growth hormone from the pituitary. Has an appetite-stimulating effect, induces adiposity and stimulates gastric acid secretion. Involved in growth regulation. Its function is as follows. Obestatin may be the ligand for GPR39. May have an appetite-reducing effect resulting in decreased food intake. May reduce gastric emptying activity and jejunal motility. This chain is Appetite-regulating hormone (GHRL), found in Felis catus (Cat).